The sequence spans 82 residues: Ice-structuring protein A (82 aa).

Residues 1 to 23 form the signal peptide; the sequence is MALSLFTVGQLIFLFWTMRITEA. A propeptide spans 24-44 (removed by a dipeptidylpeptidase); it reads SPDPAAKAAPAAAAAPAAAAP. Arg-81 is modified (arginine amide).

The protein belongs to the type-I AFP family. Detected in liver and in blood serum (at protein level).

Its subcellular location is the secreted. Contributes to protect fish blood from freezing at subzero sea water temperatures. Lowers the blood freezing point. Binds to nascent ice crystals and prevents further growth. This chain is Ice-structuring protein A, found in Pseudopleuronectes americanus (Winter flounder).